We begin with the raw amino-acid sequence, 328 residues long: MARVKIGEFKFGEDTFNLRYVLERDQQVRFVAKDVANSLKYTVCDKAIRVHVDNKYKSLFEQTIQNGGPTSNSVVKRGDPLYLQPHTVLITKSGVIQLIMKSKLPYAIELQEWLLEEVIPQVLCTGKYDPAIKQREEESKQLVTKLIATFTEHTNALQAVVAQKTEELVKKQEFIERIVAIKDKQIEAKDLQVTRVMTDLNRMYTGFQETMQKKDEIMQKKDAQVTDLVAKVVDLSDRAVQYPADKRKHPVLCVTRDGTTFTAITGQKTYVENQKHKRNINVANIVVENIRPNPTVDWNNATDRLQAKRSKRSIVLVRWKKRNNLKIG.

One can recognise a Bro-N domain in the interval 3-126; it reads RVKIGEFKFG…EVIPQVLCTG (124 aa).

This is an uncharacterized protein from Autographa californica nuclear polyhedrosis virus (AcMNPV).